A 948-amino-acid polypeptide reads, in one-letter code: Isoleucine--tRNA ligase (948 aa).

Residues P58–H68 carry the 'HIGH' region motif. Position 566 (E566) interacts with L-isoleucyl-5'-AMP. A 'KMSKS' region motif is present at residues K607–S611. K610 provides a ligand contact to ATP. Positions 911, 914, 931, and 934 each coordinate Zn(2+).

The protein belongs to the class-I aminoacyl-tRNA synthetase family. IleS type 1 subfamily. As to quaternary structure, monomer. The cofactor is Zn(2+).

Its subcellular location is the cytoplasm. It catalyses the reaction tRNA(Ile) + L-isoleucine + ATP = L-isoleucyl-tRNA(Ile) + AMP + diphosphate. Functionally, catalyzes the attachment of isoleucine to tRNA(Ile). As IleRS can inadvertently accommodate and process structurally similar amino acids such as valine, to avoid such errors it has two additional distinct tRNA(Ile)-dependent editing activities. One activity is designated as 'pretransfer' editing and involves the hydrolysis of activated Val-AMP. The other activity is designated 'posttransfer' editing and involves deacylation of mischarged Val-tRNA(Ile). This chain is Isoleucine--tRNA ligase, found in Vibrio vulnificus (strain CMCP6).